The following is a 459-amino-acid chain: Glutamyl-tRNA reductase (459 aa).

Residues 47-50 (TCNR), Ser-140, 145-147 (EPQ), and Gln-151 each bind substrate. Residue Cys-48 is the Nucleophile of the active site. 220 to 225 (AAGEMN) serves as a coordination point for NADP(+).

This sequence belongs to the glutamyl-tRNA reductase family. As to quaternary structure, homodimer.

It catalyses the reaction (S)-4-amino-5-oxopentanoate + tRNA(Glu) + NADP(+) = L-glutamyl-tRNA(Glu) + NADPH + H(+). Its pathway is porphyrin-containing compound metabolism; protoporphyrin-IX biosynthesis; 5-aminolevulinate from L-glutamyl-tRNA(Glu): step 1/2. Catalyzes the NADPH-dependent reduction of glutamyl-tRNA(Glu) to glutamate 1-semialdehyde (GSA). The polypeptide is Glutamyl-tRNA reductase (Psychrobacter arcticus (strain DSM 17307 / VKM B-2377 / 273-4)).